We begin with the raw amino-acid sequence, 159 residues long: 2-C-methyl-D-erythritol 2,4-cyclodiphosphate synthase (159 aa).

Residues aspartate 8 and histidine 10 each contribute to the a divalent metal cation site. Residues 8-10 (DVH) and 34-35 (HS) contribute to the 4-CDP-2-C-methyl-D-erythritol 2-phosphate site. Histidine 42 contributes to the a divalent metal cation binding site. Residues 56–58 (DIG), 61–65 (FPDTD), 100–106 (AQAPKML), 132–135 (TTTE), phenylalanine 139, and arginine 142 each bind 4-CDP-2-C-methyl-D-erythritol 2-phosphate.

It belongs to the IspF family. As to quaternary structure, homotrimer. A divalent metal cation is required as a cofactor.

It carries out the reaction 4-CDP-2-C-methyl-D-erythritol 2-phosphate = 2-C-methyl-D-erythritol 2,4-cyclic diphosphate + CMP. Its pathway is isoprenoid biosynthesis; isopentenyl diphosphate biosynthesis via DXP pathway; isopentenyl diphosphate from 1-deoxy-D-xylulose 5-phosphate: step 4/6. Its function is as follows. Involved in the biosynthesis of isopentenyl diphosphate (IPP) and dimethylallyl diphosphate (DMAPP), two major building blocks of isoprenoid compounds. Catalyzes the conversion of 4-diphosphocytidyl-2-C-methyl-D-erythritol 2-phosphate (CDP-ME2P) to 2-C-methyl-D-erythritol 2,4-cyclodiphosphate (ME-CPP) with a corresponding release of cytidine 5-monophosphate (CMP). This Klebsiella pneumoniae (strain 342) protein is 2-C-methyl-D-erythritol 2,4-cyclodiphosphate synthase.